The sequence spans 299 residues: ATP phosphoribosyltransferase (299 aa).

This sequence belongs to the ATP phosphoribosyltransferase family. Long subfamily. Equilibrium between an active dimeric form, an inactive hexameric form and higher aggregates. Interconversion between the various forms is largely reversible and is influenced by the natural substrates and inhibitors of the enzyme. The cofactor is Mg(2+).

It is found in the cytoplasm. The catalysed reaction is 1-(5-phospho-beta-D-ribosyl)-ATP + diphosphate = 5-phospho-alpha-D-ribose 1-diphosphate + ATP. Its pathway is amino-acid biosynthesis; L-histidine biosynthesis; L-histidine from 5-phospho-alpha-D-ribose 1-diphosphate: step 1/9. With respect to regulation, feedback inhibited by histidine. In terms of biological role, catalyzes the condensation of ATP and 5-phosphoribose 1-diphosphate to form N'-(5'-phosphoribosyl)-ATP (PR-ATP). Has a crucial role in the pathway because the rate of histidine biosynthesis seems to be controlled primarily by regulation of HisG enzymatic activity. The protein is ATP phosphoribosyltransferase of Escherichia coli O157:H7.